Here is a 405-residue protein sequence, read N- to C-terminus: Tyrosine--tRNA ligase (405 aa).

The short motif at Pro-48–His-57 is the 'HIGH' region element. Residues Lys-232–Ser-236 carry the 'KMSKS' region motif. Lys-235 contributes to the ATP binding site. The S4 RNA-binding domain occupies Leu-339–Ala-400.

It belongs to the class-I aminoacyl-tRNA synthetase family. TyrS type 2 subfamily. In terms of assembly, homodimer.

The protein localises to the cytoplasm. The catalysed reaction is tRNA(Tyr) + L-tyrosine + ATP = L-tyrosyl-tRNA(Tyr) + AMP + diphosphate + H(+). Functionally, catalyzes the attachment of tyrosine to tRNA(Tyr) in a two-step reaction: tyrosine is first activated by ATP to form Tyr-AMP and then transferred to the acceptor end of tRNA(Tyr). The chain is Tyrosine--tRNA ligase from Chlorobium luteolum (strain DSM 273 / BCRC 81028 / 2530) (Pelodictyon luteolum).